The chain runs to 667 residues: Threonine--tRNA ligase (667 aa).

Residues 3-64 (DMIRVTLPDG…EEDTNLALVT (62 aa)) form the TGS domain. Residues 252–561 (DHRRLGQEMD…LIEHFVGRFP (310 aa)) are catalytic. Zn(2+) is bound by residues Cys-357, His-408, and His-538.

It belongs to the class-II aminoacyl-tRNA synthetase family. In terms of assembly, homodimer. The cofactor is Zn(2+).

It is found in the cytoplasm. The enzyme catalyses tRNA(Thr) + L-threonine + ATP = L-threonyl-tRNA(Thr) + AMP + diphosphate + H(+). Catalyzes the attachment of threonine to tRNA(Thr) in a two-step reaction: L-threonine is first activated by ATP to form Thr-AMP and then transferred to the acceptor end of tRNA(Thr). Also edits incorrectly charged L-seryl-tRNA(Thr). The chain is Threonine--tRNA ligase from Sphingopyxis alaskensis (strain DSM 13593 / LMG 18877 / RB2256) (Sphingomonas alaskensis).